The sequence spans 331 residues: 6-phosphogluconolactonase (331 aa).

Lys287 carries the post-translational modification N6-acetyllysine.

This sequence belongs to the cycloisomerase 2 family.

The enzyme catalyses 6-phospho-D-glucono-1,5-lactone + H2O = 6-phospho-D-gluconate + H(+). It functions in the pathway carbohydrate degradation; pentose phosphate pathway; D-ribulose 5-phosphate from D-glucose 6-phosphate (oxidative stage): step 2/3. In terms of biological role, catalyzes the hydrolysis of 6-phosphogluconolactone to 6-phosphogluconate. This Escherichia coli O157:H7 protein is 6-phosphogluconolactonase.